Reading from the N-terminus, the 1070-residue chain is Carbamoyl phosphate synthase large chain (1070 aa).

The segment at 1–401 (MPKRDDIKTI…ALLKAVRSLE (401 aa)) is carboxyphosphate synthetic domain. Arg129, Arg169, Gly175, Gly176, Lys208, Ile210, Glu215, Gly241, Ile242, His243, Gln284, and Glu298 together coordinate ATP. One can recognise an ATP-grasp 1 domain in the interval 133 to 327 (RDLMNELGEP…IAKLAAKIAV (195 aa)). Residues Gln284, Glu298, and Asn300 each coordinate Mg(2+). Residues Gln284, Glu298, and Asn300 each coordinate Mn(2+). The tract at residues 402–546 (IGADHLLLEE…YSTYEDENES (145 aa)) is oligomerization domain. Residues 547–929 (IRSSKESVIV…ALYKGFVASG (383 aa)) form a carbamoyl phosphate synthetic domain region. In terms of domain architecture, ATP-grasp 2 spans 671 to 861 (EKALEILQIP…MANVATRVIL (191 aa)). Arg707, Arg746, Val748, Glu752, Gly777, Val778, His779, Ser780, Gln820, and Glu832 together coordinate ATP. Mg(2+)-binding residues include Gln820, Glu832, and Asn834. Residues Gln820, Glu832, and Asn834 each coordinate Mn(2+). The MGS-like domain maps to 930-1070 (TTMHDYGTVL…SEVKQPKARV (141 aa)). Residues 930–1070 (TTMHDYGTVL…SEVKQPKARV (141 aa)) form an allosteric domain region.

The protein belongs to the CarB family. Composed of two chains; the small (or glutamine) chain promotes the hydrolysis of glutamine to ammonia, which is used by the large (or ammonia) chain to synthesize carbamoyl phosphate. Tetramer of heterodimers (alpha,beta)4. The cofactor is Mg(2+). Requires Mn(2+) as cofactor.

It catalyses the reaction hydrogencarbonate + L-glutamine + 2 ATP + H2O = carbamoyl phosphate + L-glutamate + 2 ADP + phosphate + 2 H(+). The catalysed reaction is hydrogencarbonate + NH4(+) + 2 ATP = carbamoyl phosphate + 2 ADP + phosphate + 2 H(+). It participates in amino-acid biosynthesis; L-arginine biosynthesis; carbamoyl phosphate from bicarbonate: step 1/1. It functions in the pathway pyrimidine metabolism; UMP biosynthesis via de novo pathway; (S)-dihydroorotate from bicarbonate: step 1/3. Its function is as follows. Large subunit of the glutamine-dependent carbamoyl phosphate synthetase (CPSase). CPSase catalyzes the formation of carbamoyl phosphate from the ammonia moiety of glutamine, carbonate, and phosphate donated by ATP, constituting the first step of 2 biosynthetic pathways, one leading to arginine and/or urea and the other to pyrimidine nucleotides. The large subunit (synthetase) binds the substrates ammonia (free or transferred from glutamine from the small subunit), hydrogencarbonate and ATP and carries out an ATP-coupled ligase reaction, activating hydrogencarbonate by forming carboxy phosphate which reacts with ammonia to form carbamoyl phosphate. This is Carbamoyl phosphate synthase large chain from Listeria innocua serovar 6a (strain ATCC BAA-680 / CLIP 11262).